A 671-amino-acid chain; its full sequence is cGMP-dependent protein kinase 1 (671 aa).

Residue Ser-2 is modified to N-acetylserine. A coiled-coil region spans residues 2-59 (SELEEDFAKILMLKEERIKELEKRLSEKEEEIQELKRKLHKCQSVLPVPSTHIGPRTT). A required for dimerization region spans residues 2-102 (SELEEDFAKI…LIKEAILDND (101 aa)). A leucine-zipper region spans residues 9–44 (AKILMLKEERIKELEKRLSEKEEEIQELKRKLHKCQ). The interval 50–75 (PSTHIGPRTTRAQGISAEPQTYRSFH) is autoinhibitory domain. Phosphothreonine; by autocatalysis is present on Thr-59. The tract at residues 103–220 (FMKNLELSQI…EYMEFLKSVP (118 aa)) is cGMP-binding, high affinity. 3',5'-cyclic AMP-binding positions include 167–170 (GELA) and 177–178 (RT). Residues 167 to 170 (GELA), 177 to 178 (RT), Arg-282, 291 to 294 (GEKA), 301 to 302 (RT), and Tyr-336 each bind 3',5'-cyclic GMP. A cGMP-binding, low affinity region spans residues 221-341 (TFQSLPEEIL…SNKAYEDAEA (121 aa)). Residues 291–294 (GEKA), 301–302 (RT), and Tyr-336 each bind 3',5'-cyclic AMP. The 260-residue stretch at 360–619 (FNIIDTLGVG…VKDIQKHKWF (260 aa)) folds into the Protein kinase domain. Residues 366-374 (LGVGGFGRV) and Lys-390 each bind ATP. Asp-484 functions as the Proton acceptor in the catalytic mechanism. Position 515 is a phosphothreonine (Thr-515). The AGC-kinase C-terminal domain maps to 620 to 671 (EGFNWEGLRKGTLTPPIIPSVASPTDTSNFDSFPEDNDEPPPDDNSGWDIDF). The interval 635–671 (PIIPSVASPTDTSNFDSFPEDNDEPPPDDNSGWDIDF) is disordered. Over residues 652-661 (FPEDNDEPPP) the composition is skewed to acidic residues.

It belongs to the protein kinase superfamily. AGC Ser/Thr protein kinase family. cGMP subfamily. Isoform alpha: parallel homodimer or heterodimer and also heterotetramer. Interacts directly with PPP1R12A. Non-covalent dimer of dimer of PRKG1-PRKG1 and PPP1R12A-PPP1R12A. This interaction targets PRKG1 to stress fibers to mediate smooth muscle cell relaxation and vasodilation in responses to rises in cGMP. Isoform beta: antiparallel homodimer. Part of cGMP kinase signaling complex at least composed of ACTA2/alpha-actin, CNN1/calponin H1, PLN/phospholamban, PRKG1 and ITPR1. Interacts with IRAG1. Forms a stable complex with ITPR1, IRAG1, and isoform beta of PRKG1. Interacts with TRPC7 (via ankyrin repeat domain). Isoform alpha interacts with RGS2. Interacts with GTF2I. Post-translationally, autophosphorylation increases kinase activity. 65 kDa monomer is produced by proteolytic cleavage. Primarily expressed in lung and placenta.

It is found in the cytoplasm. The enzyme catalyses L-seryl-[protein] + ATP = O-phospho-L-seryl-[protein] + ADP + H(+). It carries out the reaction L-threonyl-[protein] + ATP = O-phospho-L-threonyl-[protein] + ADP + H(+). In the absence of cGMP, PRKG1 activity is suppressed by autoinhibitory contacts. Serine/threonine protein kinase that acts as a key mediator of the nitric oxide (NO)/cGMP signaling pathway. GMP binding activates PRKG1, which phosphorylates serines and threonines on many cellular proteins. Numerous protein targets for PRKG1 phosphorylation are implicated in modulating cellular calcium, but the contribution of each of these targets may vary substantially among cell types. Proteins that are phosphorylated by PRKG1 regulate platelet activation and adhesion, smooth muscle contraction, cardiac function, gene expression, feedback of the NO-signaling pathway, and other processes involved in several aspects of the CNS like axon guidance, hippocampal and cerebellar learning, circadian rhythm and nociception. Smooth muscle relaxation is mediated through lowering of intracellular free calcium, by desensitization of contractile proteins to calcium, and by decrease in the contractile state of smooth muscle or in platelet activation. Regulates intracellular calcium levels via several pathways: phosphorylates IRAG1 and inhibits IP3-induced Ca(2+) release from intracellular stores, phosphorylation of KCNMA1 (BKCa) channels decreases intracellular Ca(2+) levels, which leads to increased opening of this channel. PRKG1 phosphorylates the canonical transient receptor potential channel (TRPC) family which inactivates the associated inward calcium current. Another mode of action of NO/cGMP/PKGI signaling involves PKGI-mediated inactivation of the Ras homolog gene family member A (RhoA). Phosphorylation of RHOA by PRKG1 blocks the action of this protein in myriad processes: regulation of RHOA translocation; decreasing contraction; controlling vesicle trafficking, reduction of myosin light chain phosphorylation resulting in vasorelaxation. Activation of PRKG1 by NO signaling also alters gene expression in a number of tissues. In smooth muscle cells, increased cGMP and PRKG1 activity influence expression of smooth muscle-specific contractile proteins, levels of proteins in the NO/cGMP signaling pathway, down-regulation of the matrix proteins osteopontin and thrombospondin-1 to limit smooth muscle cell migration and phenotype. Regulates vasodilator-stimulated phosphoprotein (VASP) functions in platelets and smooth muscle. The chain is cGMP-dependent protein kinase 1 (PRKG1) from Homo sapiens (Human).